The chain runs to 260 residues: uncharacterized protein (260 aa).

This is an uncharacterized protein from Aquifex aeolicus (strain VF5).